The sequence spans 280 residues: UDP-3-O-acyl-N-acetylglucosamine deacetylase (280 aa).

Positions 79, 237, and 241 each coordinate Zn(2+). H264 serves as the catalytic Proton donor.

It belongs to the LpxC family. It depends on Zn(2+) as a cofactor.

The catalysed reaction is a UDP-3-O-[(3R)-3-hydroxyacyl]-N-acetyl-alpha-D-glucosamine + H2O = a UDP-3-O-[(3R)-3-hydroxyacyl]-alpha-D-glucosamine + acetate. It functions in the pathway glycolipid biosynthesis; lipid IV(A) biosynthesis; lipid IV(A) from (3R)-3-hydroxytetradecanoyl-[acyl-carrier-protein] and UDP-N-acetyl-alpha-D-glucosamine: step 2/6. Its function is as follows. Catalyzes the hydrolysis of UDP-3-O-myristoyl-N-acetylglucosamine to form UDP-3-O-myristoylglucosamine and acetate, the committed step in lipid A biosynthesis. This is UDP-3-O-acyl-N-acetylglucosamine deacetylase from Chlamydia caviae (strain ATCC VR-813 / DSM 19441 / 03DC25 / GPIC) (Chlamydophila caviae).